The chain runs to 162 residues: NADH-quinone oxidoreductase subunit I (162 aa).

4Fe-4S ferredoxin-type domains lie at 53 to 83 (QRRYANGEERCIACKLCEAVCPAMAISIESE) and 93 to 122 (SRYDIDLTKCIFCGFCEEACPVDAIVETHI). Residues Cys63, Cys66, Cys69, Cys73, Cys102, Cys105, Cys108, and Cys112 each contribute to the [4Fe-4S] cluster site.

Belongs to the complex I 23 kDa subunit family. As to quaternary structure, NDH-1 is composed of 14 different subunits. Subunits NuoA, H, J, K, L, M, N constitute the membrane sector of the complex. [4Fe-4S] cluster is required as a cofactor.

The protein localises to the cell inner membrane. The catalysed reaction is a quinone + NADH + 5 H(+)(in) = a quinol + NAD(+) + 4 H(+)(out). Functionally, NDH-1 shuttles electrons from NADH, via FMN and iron-sulfur (Fe-S) centers, to quinones in the respiratory chain. The immediate electron acceptor for the enzyme in this species is believed to be ubiquinone. Couples the redox reaction to proton translocation (for every two electrons transferred, four hydrogen ions are translocated across the cytoplasmic membrane), and thus conserves the redox energy in a proton gradient. In Chromobacterium violaceum (strain ATCC 12472 / DSM 30191 / JCM 1249 / CCUG 213 / NBRC 12614 / NCIMB 9131 / NCTC 9757 / MK), this protein is NADH-quinone oxidoreductase subunit I.